We begin with the raw amino-acid sequence, 109 residues long: Large ribosomal subunit protein uL22 (109 aa).

This sequence belongs to the universal ribosomal protein uL22 family. Part of the 50S ribosomal subunit.

In terms of biological role, this protein binds specifically to 23S rRNA; its binding is stimulated by other ribosomal proteins, e.g. L4, L17, and L20. It is important during the early stages of 50S assembly. It makes multiple contacts with different domains of the 23S rRNA in the assembled 50S subunit and ribosome. Functionally, the globular domain of the protein is located near the polypeptide exit tunnel on the outside of the subunit, while an extended beta-hairpin is found that lines the wall of the exit tunnel in the center of the 70S ribosome. The chain is Large ribosomal subunit protein uL22 from Wolinella succinogenes (strain ATCC 29543 / DSM 1740 / CCUG 13145 / JCM 31913 / LMG 7466 / NCTC 11488 / FDC 602W) (Vibrio succinogenes).